The primary structure comprises 298 residues: Tritrans,polycis-undecaprenyl-diphosphate synthase (geranylgeranyl-diphosphate specific) (298 aa).

Aspartate 35 is an active-site residue. Position 35 (aspartate 35) interacts with Mg(2+). Substrate-binding positions include 36–39, arginine 48, histidine 52, and 80–82; these read GNRR and STE. Asparagine 83 serves as the catalytic Proton acceptor. Residues phenylalanine 84, arginine 86, arginine 208, and 214-216 contribute to the substrate site; that span reads RIS.

This sequence belongs to the UPP synthase family. Homodimer. Mg(2+) is required as a cofactor.

The catalysed reaction is geranylgeranyl diphosphate + 7 isopentenyl diphosphate = tri-trans,hepta-cis-undecaprenyl diphosphate + 7 diphosphate. Functionally, catalyzes the sequential condensation of isopentenyl diphosphate (IPP) with geranylgeranyl diphosphate (GGPP) to yield (2Z,6Z,10Z,14Z,18Z,22Z,26Z,30E,34E,38E)-undecaprenyl diphosphate (tritrans,heptacis-UPP). It is probably the precursor of glycosyl carrier lipids. In Methanosarcina mazei (strain ATCC BAA-159 / DSM 3647 / Goe1 / Go1 / JCM 11833 / OCM 88) (Methanosarcina frisia), this protein is Tritrans,polycis-undecaprenyl-diphosphate synthase (geranylgeranyl-diphosphate specific).